Reading from the N-terminus, the 251-residue chain is MRKPIIAGNWKMNMNPTQTTEFVNAIKANLPKFDQTESVIGAPAVDLPALLEAAKGTDLKVAAENCYFEEAGAFTGETSPKTLNEMGVDYVIIGHSERRDYFHETDEDINKKAHAIFKNNMTPIFCCGESLETREAGKAEEWVSNQVTEGLKGLSADQVSSMVIAYEPIWAIGTGKTASADQAQEICAVVRQTVAKLYDQTVADKVRIQYGGSVKPANVKEIMGKEDIDGGLVGGASMEPASFLDLVHFND.

Substrate is bound at residue 9–11 (NWK). The active-site Electrophile is histidine 95. Catalysis depends on glutamate 167, which acts as the Proton acceptor. Substrate is bound by residues glycine 173, serine 213, and 234–235 (GG).

This sequence belongs to the triosephosphate isomerase family. In terms of assembly, homodimer.

Its subcellular location is the cytoplasm. The catalysed reaction is D-glyceraldehyde 3-phosphate = dihydroxyacetone phosphate. The protein operates within carbohydrate biosynthesis; gluconeogenesis. It participates in carbohydrate degradation; glycolysis; D-glyceraldehyde 3-phosphate from glycerone phosphate: step 1/1. Involved in the gluconeogenesis. Catalyzes stereospecifically the conversion of dihydroxyacetone phosphate (DHAP) to D-glyceraldehyde-3-phosphate (G3P). The chain is Triosephosphate isomerase from Latilactobacillus sakei subsp. sakei (strain 23K) (Lactobacillus sakei subsp. sakei).